The sequence spans 527 residues: Catalase (527 aa).

Residues 1–22 (MADNRDPASDQMKHWKEQRAAQ) show a composition bias toward basic and acidic residues. The interval 1–32 (MADNRDPASDQMKHWKEQRAAQKPDILTTGSG) is disordered. Residue alanine 2 is modified to N-acetylalanine. Residue serine 9 is modified to Phosphoserine. Position 13 is an N6-succinyllysine (lysine 13). Active-site residues include histidine 75 and asparagine 148. Positions 194, 201, 203, and 213 each coordinate NADP(+). N6-succinyllysine is present on lysine 221. The residue at position 233 (lysine 233) is an N6-acetyllysine. The NADP(+) site is built by lysine 237, tryptophan 303, and histidine 305. Tyrosine 358 provides a ligand contact to heme. Phosphoserine occurs at positions 417 and 434. At lysine 480 the chain carries N6-acetyllysine; alternate. Lysine 480 carries the N6-succinyllysine; alternate modification. At lysine 499 the chain carries N6-acetyllysine. At threonine 511 the chain carries Phosphothreonine. Serine 517 bears the Phosphoserine mark. The Microbody targeting signal; atypical signature appears at 524–527 (KANL).

Belongs to the catalase family. As to quaternary structure, homotetramer. Interacts (via microbody targeting signal) with PEX5, monomeric form interacts with PEX5, leading to its translocation into peroxisomes. Heme is required as a cofactor. The cofactor is NADP(+).

Its subcellular location is the peroxisome matrix. It carries out the reaction 2 H2O2 = O2 + 2 H2O. Functionally, catalyzes the degradation of hydrogen peroxide (H(2)O(2)) generated by peroxisomal oxidases to water and oxygen, thereby protecting cells from the toxic effects of hydrogen peroxide. Promotes growth of cells including T-cells, B-cells, myeloid leukemia cells, melanoma cells, mastocytoma cells and normal and transformed fibroblast cells. This Sus scrofa (Pig) protein is Catalase (CAT).